A 227-amino-acid polypeptide reads, in one-letter code: Cytochrome c oxidase subunit 2 (227 aa).

At 1-14 the chain is on the mitochondrial intermembrane side; sequence MAHPVQLGFQDAAS. The chain crosses the membrane as a helical span at residues 15-45; it reads PIMEELLYFHDHTLMIMFLISSLVLYIISLM. Topologically, residues 46 to 59 are mitochondrial matrix; the sequence is LTTKLTHTSTMDAQ. The chain crosses the membrane as a helical span at residues 60–87; sequence EVETVWTILPAAILILIALPSLRILYMM. Residues 88-227 are Mitochondrial intermembrane-facing; the sequence is DEITSPSLTL…HFEEWLLFTL (140 aa). Cu cation contacts are provided by histidine 161, cysteine 196, glutamate 198, cysteine 200, histidine 204, and methionine 207. Glutamate 198 lines the Mg(2+) pocket.

Belongs to the cytochrome c oxidase subunit 2 family. Component of the cytochrome c oxidase (complex IV, CIV), a multisubunit enzyme composed of 14 subunits. The complex is composed of a catalytic core of 3 subunits MT-CO1, MT-CO2 and MT-CO3, encoded in the mitochondrial DNA, and 11 supernumerary subunits COX4I, COX5A, COX5B, COX6A, COX6B, COX6C, COX7A, COX7B, COX7C, COX8 and NDUFA4, which are encoded in the nuclear genome. The complex exists as a monomer or a dimer and forms supercomplexes (SCs) in the inner mitochondrial membrane with NADH-ubiquinone oxidoreductase (complex I, CI) and ubiquinol-cytochrome c oxidoreductase (cytochrome b-c1 complex, complex III, CIII), resulting in different assemblies (supercomplex SCI(1)III(2)IV(1) and megacomplex MCI(2)III(2)IV(2)). Found in a complex with TMEM177, COA6, COX18, COX20, SCO1 and SCO2. Interacts with TMEM177 in a COX20-dependent manner. Interacts with COX20. Interacts with COX16. The cofactor is Cu cation.

It is found in the mitochondrion inner membrane. It catalyses the reaction 4 Fe(II)-[cytochrome c] + O2 + 8 H(+)(in) = 4 Fe(III)-[cytochrome c] + 2 H2O + 4 H(+)(out). In terms of biological role, component of the cytochrome c oxidase, the last enzyme in the mitochondrial electron transport chain which drives oxidative phosphorylation. The respiratory chain contains 3 multisubunit complexes succinate dehydrogenase (complex II, CII), ubiquinol-cytochrome c oxidoreductase (cytochrome b-c1 complex, complex III, CIII) and cytochrome c oxidase (complex IV, CIV), that cooperate to transfer electrons derived from NADH and succinate to molecular oxygen, creating an electrochemical gradient over the inner membrane that drives transmembrane transport and the ATP synthase. Cytochrome c oxidase is the component of the respiratory chain that catalyzes the reduction of oxygen to water. Electrons originating from reduced cytochrome c in the intermembrane space (IMS) are transferred via the dinuclear copper A center (CU(A)) of subunit 2 and heme A of subunit 1 to the active site in subunit 1, a binuclear center (BNC) formed by heme A3 and copper B (CU(B)). The BNC reduces molecular oxygen to 2 water molecules using 4 electrons from cytochrome c in the IMS and 4 protons from the mitochondrial matrix. The polypeptide is Cytochrome c oxidase subunit 2 (MT-CO2) (Varecia variegata (Black-and-white ruffed lemur)).